The sequence spans 454 residues: tRNA modification GTPase MnmE (454 aa).

3 residues coordinate (6S)-5-formyl-5,6,7,8-tetrahydrofolate: Arg23, Glu80, and Lys120. Residues 216 to 377 (GMKVVIAGRP…LRNHLKQSMG (162 aa)) form the TrmE-type G domain. Position 226 (Asn226) interacts with K(+). GTP contacts are provided by residues 226–231 (NAGKSS), 245–251 (TDIAGTT), 270–273 (DTAG), 335–338 (NKAD), and 358–360 (SAR). Ser230 lines the Mg(2+) pocket. K(+) contacts are provided by Thr245, Ile247, and Thr250. Thr251 is a binding site for Mg(2+). Lys454 is a binding site for (6S)-5-formyl-5,6,7,8-tetrahydrofolate.

The protein belongs to the TRAFAC class TrmE-Era-EngA-EngB-Septin-like GTPase superfamily. TrmE GTPase family. In terms of assembly, homodimer. Heterotetramer of two MnmE and two MnmG subunits. The cofactor is K(+).

The protein resides in the cytoplasm. Functionally, exhibits a very high intrinsic GTPase hydrolysis rate. Involved in the addition of a carboxymethylaminomethyl (cmnm) group at the wobble position (U34) of certain tRNAs, forming tRNA-cmnm(5)s(2)U34. The chain is tRNA modification GTPase MnmE from Shigella sonnei (strain Ss046).